A 261-amino-acid polypeptide reads, in one-letter code: Cytochrome c oxidase subunit 3 (261 aa).

The Mitochondrial matrix segment spans residues 1–15 (MTHQSHAYHMVKPSP). Residues 16–34 (WPLTGALSALLMTSGLAMW) form a helical membrane-spanning segment. The Mitochondrial intermembrane segment spans residues 35 to 40 (FHFYST). Residues 41–66 (TLLTLGLLTNTLTMYQWWRDVMREGT) form a helical membrane-spanning segment. Topologically, residues 67 to 72 (YQGHHT) are mitochondrial matrix. A helical membrane pass occupies residues 73–105 (PPVQKGLRYGMILFITSEVFFFAGFFWAFYHSS). The Mitochondrial intermembrane portion of the chain corresponds to 106–128 (LAPTPQLGGHWPPTGITPLNPLE). The helical transmembrane segment at 129-152 (VPLLNTSVLLASGVSITWAHHSLM) threads the bilayer. Topologically, residues 153 to 155 (ENN) are mitochondrial matrix. The chain crosses the membrane as a helical span at residues 156–183 (RNQMIQALLITILLGLYFTLLQASEYFE). Residues 184–190 (SPFTISD) lie on the Mitochondrial intermembrane side of the membrane. The chain crosses the membrane as a helical span at residues 191 to 223 (GIYGSTFFVATGFHGLHVIIGSTFLTICLIRQL). Topologically, residues 224 to 232 (MFHFTSKHH) are mitochondrial matrix. A helical transmembrane segment spans residues 233 to 256 (FGFQAAAWYWHFVDVVWLFLYVSI). Over 257–261 (YWWGS) the chain is Mitochondrial intermembrane.

Belongs to the cytochrome c oxidase subunit 3 family. Component of the cytochrome c oxidase (complex IV, CIV), a multisubunit enzyme composed of 14 subunits. The complex is composed of a catalytic core of 3 subunits MT-CO1, MT-CO2 and MT-CO3, encoded in the mitochondrial DNA, and 11 supernumerary subunits COX4I, COX5A, COX5B, COX6A, COX6B, COX6C, COX7A, COX7B, COX7C, COX8 and NDUFA4, which are encoded in the nuclear genome. The complex exists as a monomer or a dimer and forms supercomplexes (SCs) in the inner mitochondrial membrane with NADH-ubiquinone oxidoreductase (complex I, CI) and ubiquinol-cytochrome c oxidoreductase (cytochrome b-c1 complex, complex III, CIII), resulting in different assemblies (supercomplex SCI(1)III(2)IV(1) and megacomplex MCI(2)III(2)IV(2)).

The protein resides in the mitochondrion inner membrane. The enzyme catalyses 4 Fe(II)-[cytochrome c] + O2 + 8 H(+)(in) = 4 Fe(III)-[cytochrome c] + 2 H2O + 4 H(+)(out). In terms of biological role, component of the cytochrome c oxidase, the last enzyme in the mitochondrial electron transport chain which drives oxidative phosphorylation. The respiratory chain contains 3 multisubunit complexes succinate dehydrogenase (complex II, CII), ubiquinol-cytochrome c oxidoreductase (cytochrome b-c1 complex, complex III, CIII) and cytochrome c oxidase (complex IV, CIV), that cooperate to transfer electrons derived from NADH and succinate to molecular oxygen, creating an electrochemical gradient over the inner membrane that drives transmembrane transport and the ATP synthase. Cytochrome c oxidase is the component of the respiratory chain that catalyzes the reduction of oxygen to water. Electrons originating from reduced cytochrome c in the intermembrane space (IMS) are transferred via the dinuclear copper A center (CU(A)) of subunit 2 and heme A of subunit 1 to the active site in subunit 1, a binuclear center (BNC) formed by heme A3 and copper B (CU(B)). The BNC reduces molecular oxygen to 2 water molecules using 4 electrons from cytochrome c in the IMS and 4 protons from the mitochondrial matrix. The polypeptide is Cytochrome c oxidase subunit 3 (MT-CO3) (Pan troglodytes (Chimpanzee)).